The sequence spans 79 residues: DNA-directed RNA polymerase subunit omega (79 aa).

The protein belongs to the RNA polymerase subunit omega family. In cyanobacteria the RNAP catalytic core is composed of 2 alpha, 1 beta, 1 beta', 1 gamma and 1 omega subunit. When a sigma factor is associated with the core the holoenzyme is formed, which can initiate transcription.

The catalysed reaction is RNA(n) + a ribonucleoside 5'-triphosphate = RNA(n+1) + diphosphate. Its function is as follows. Promotes RNA polymerase assembly. Latches the N- and C-terminal regions of the beta' subunit thereby facilitating its interaction with the beta and alpha subunits. The sequence is that of DNA-directed RNA polymerase subunit omega from Synechococcus sp. (strain JA-3-3Ab) (Cyanobacteria bacterium Yellowstone A-Prime).